The following is a 377-amino-acid chain: MKIALIATEKLPVPSVRGGAIQIYLEAVAPLIAKKHEVTVFSIKDPNLADREKVDGVHYVHLDEDRYEEAVGAELKKSRFDLVHVCNRPSWVPKLKKQAPDAVFILSVHNEMFAYDKISQAEGEICIDSVAQIVTVSDYIGQTITSRFPSARSKTKTVYSGVDLKTYHPRWTNEGQRAREEMRSELGLHGKKIVLFVGRLSKVKGPHILLQALPDIIEEHPDVMMVFIGSKWFGDNELNNYVKHLHTLGAMQKDHVTFIQFVKPKDIPRLYTMSDVFVCSSQWQEPLARVHYEAMAAGLPIITSNRGGNPEVIEEGKNGYIIHDFENPKQYAERINDLLSSSEKRERLGKYSRREAESNFGWQRVAENLLSVYEKNR.

The protein belongs to the glycosyltransferase group 1 family. Glycosyltransferase 4 subfamily.

The chain is Spore coat protein SA (cotSA) from Bacillus subtilis (strain 168).